The chain runs to 244 residues: Phosphoadenosine 5'-phosphosulfate reductase (244 aa).

C239 acts as the Nucleophile; cysteine thiosulfonate intermediate in catalysis.

The protein belongs to the PAPS reductase family. CysH subfamily.

The protein localises to the cytoplasm. The catalysed reaction is [thioredoxin]-disulfide + sulfite + adenosine 3',5'-bisphosphate + 2 H(+) = [thioredoxin]-dithiol + 3'-phosphoadenylyl sulfate. Its pathway is sulfur metabolism; hydrogen sulfide biosynthesis; sulfite from sulfate: step 3/3. Functionally, catalyzes the formation of sulfite from phosphoadenosine 5'-phosphosulfate (PAPS) using thioredoxin as an electron donor. This Salmonella dublin (strain CT_02021853) protein is Phosphoadenosine 5'-phosphosulfate reductase.